Here is a 361-residue protein sequence, read N- to C-terminus: Phospho-N-acetylmuramoyl-pentapeptide-transferase (361 aa).

A run of 10 helical transmembrane segments spans residues 25–45 (RAVMAALTALTISLLLGPWVI), 73–93 (TMGGSLILLAITLTTLLWADL), 97–117 (YVWLLLAVMLGTGALGFYDDW), 132–152 (FKMAWQSAIAIGAGVFLIATA), 167–187 (TVAYPLGAVGFCVLTYFVIVG), 200–220 (GLAALPTVLVSAGLAIFAYVA), 240–260 (VVVFCAAMCGACLGFLWFNAY), 264–284 (VFMGDVGALALGAALGTVAVI), 289–309 (IVLFLMGGLFVMEALSVMIQV), and 338–358 (QVVVRFWIVTMMLVLIGLSTL).

Belongs to the glycosyltransferase 4 family. MraY subfamily. Mg(2+) serves as cofactor.

The protein resides in the cell inner membrane. The catalysed reaction is UDP-N-acetyl-alpha-D-muramoyl-L-alanyl-gamma-D-glutamyl-meso-2,6-diaminopimeloyl-D-alanyl-D-alanine + di-trans,octa-cis-undecaprenyl phosphate = di-trans,octa-cis-undecaprenyl diphospho-N-acetyl-alpha-D-muramoyl-L-alanyl-D-glutamyl-meso-2,6-diaminopimeloyl-D-alanyl-D-alanine + UMP. The protein operates within cell wall biogenesis; peptidoglycan biosynthesis. Catalyzes the initial step of the lipid cycle reactions in the biosynthesis of the cell wall peptidoglycan: transfers peptidoglycan precursor phospho-MurNAc-pentapeptide from UDP-MurNAc-pentapeptide onto the lipid carrier undecaprenyl phosphate, yielding undecaprenyl-pyrophosphoryl-MurNAc-pentapeptide, known as lipid I. This Chromobacterium violaceum (strain ATCC 12472 / DSM 30191 / JCM 1249 / CCUG 213 / NBRC 12614 / NCIMB 9131 / NCTC 9757 / MK) protein is Phospho-N-acetylmuramoyl-pentapeptide-transferase.